The primary structure comprises 264 residues: Indole-3-glycerol phosphate synthase (264 aa).

This sequence belongs to the TrpC family.

It catalyses the reaction 1-(2-carboxyphenylamino)-1-deoxy-D-ribulose 5-phosphate + H(+) = (1S,2R)-1-C-(indol-3-yl)glycerol 3-phosphate + CO2 + H2O. Its pathway is amino-acid biosynthesis; L-tryptophan biosynthesis; L-tryptophan from chorismate: step 4/5. The polypeptide is Indole-3-glycerol phosphate synthase (Lactococcus lactis subsp. cremoris (strain MG1363)).